The sequence spans 930 residues: Probable SapB synthase (930 aa).

The Protein kinase domain occupies 256–516 (YTVESALHFS…GSTRADETTR (261 aa)). Residues 262 to 270 (LHFSNGGGV) and Lys-285 contribute to the ATP site. The active-site Proton acceptor is the Asp-395. A helical transmembrane segment spans residues 447-467 (YALACLRIVLFLPLTSLLAVD). Positions 501-527 (GSTRVDGSTRADETTRADETTRLDVTT) are enriched in basic and acidic residues. Disordered stretches follow at residues 501-558 (GSTR…RDSM) and 911-930 (PFLP…HQEP). Positions 532–546 (APDAARRPAGPVAPV) are enriched in low complexity. Positions 547-556 (RPDDWPRSRD) are enriched in basic and acidic residues.

It in the N-terminal section; belongs to the protein kinase superfamily.

The protein resides in the cell membrane. In terms of biological role, required for aerial hyphae formation. Probably involved in processing the precursor of SapB to its mature form. This Streptomyces coelicolor (strain ATCC BAA-471 / A3(2) / M145) protein is Probable SapB synthase.